The following is a 785-amino-acid chain: Rho-GTPase-activating protein RGD3 (785 aa).

Serine 2 is modified (N-acetylserine). Residues 31–463 (ISLRNTYWTK…PQETANADVR (433 aa)) enclose the F-BAR domain. The disordered stretch occupies residues 313-340 (SNGNAGNRKKKSYGELTHSDNEHEEKSN). Positions 329–339 (THSDNEHEEKS) are enriched in basic and acidic residues. One can recognise a Rho-GAP domain in the interval 520–702 (IILRQIEKEP…TFFINERTVE (183 aa)). The disordered stretch occupies residues 732–785 (TAPIHSTPKPPPNDKDGHFIPRPFKTSSTPTTPERPKRKSGLFLPINVNDVPST). At serine 759 the chain carries Phosphoserine. Phosphothreonine occurs at positions 760, 762, and 763.

In terms of processing, phosphorylation at the C-terminus negatively regulates the activity and the polarized localization.

It is found in the cytoplasmic vesicle membrane. The protein localises to the cell membrane. The protein resides in the bud tip. Its subcellular location is the bud neck. GTPase activating protein (GAP) for RHO3 and CDC42 that binds membranes through phosphatidylinositol 4,5-bisphosphate. Plays a key role in cell polarity. Modulates the RHO3 distribution at the plasma membrane and its polarity during growth. This is Rho-GTPase-activating protein RGD3 from Saccharomyces cerevisiae (strain ATCC 204508 / S288c) (Baker's yeast).